The chain runs to 78 residues: Exodeoxyribonuclease 7 small subunit (78 aa).

This sequence belongs to the XseB family. As to quaternary structure, heterooligomer composed of large and small subunits.

Its subcellular location is the cytoplasm. The enzyme catalyses Exonucleolytic cleavage in either 5'- to 3'- or 3'- to 5'-direction to yield nucleoside 5'-phosphates.. Bidirectionally degrades single-stranded DNA into large acid-insoluble oligonucleotides, which are then degraded further into small acid-soluble oligonucleotides. The chain is Exodeoxyribonuclease 7 small subunit from Desulfitobacterium hafniense (strain Y51).